The primary structure comprises 486 residues: Malonate-semialdehyde dehydrogenase (486 aa).

5 residues coordinate NAD(+): Phe-154, Lys-178, Glu-181, Arg-182, and Ser-231. The Nucleophile role is filled by Cys-286. An NAD(+)-binding site is contributed by Glu-386.

The protein belongs to the aldehyde dehydrogenase family. IolA subfamily. As to quaternary structure, homotetramer.

The catalysed reaction is 3-oxopropanoate + NAD(+) + CoA + H2O = hydrogencarbonate + acetyl-CoA + NADH + H(+). The enzyme catalyses 2-methyl-3-oxopropanoate + NAD(+) + CoA + H2O = propanoyl-CoA + hydrogencarbonate + NADH + H(+). The protein operates within polyol metabolism; myo-inositol degradation into acetyl-CoA; acetyl-CoA from myo-inositol: step 7/7. Catalyzes the oxidation of malonate semialdehyde (MSA) and methylmalonate semialdehyde (MMSA) into acetyl-CoA and propanoyl-CoA, respectively. Is involved in a myo-inositol catabolic pathway. Bicarbonate, and not CO2, is the end-product of the enzymatic reaction. This is Malonate-semialdehyde dehydrogenase from Bacillus cereus (strain ATCC 10987 / NRS 248).